Reading from the N-terminus, the 330-residue chain is Ferredoxin--NADP reductase (330 aa).

7 residues coordinate FAD: E35, Q43, Y48, V90, F123, D285, and T326.

The protein belongs to the ferredoxin--NADP reductase type 2 family. Homodimer. Requires FAD as cofactor.

It carries out the reaction 2 reduced [2Fe-2S]-[ferredoxin] + NADP(+) + H(+) = 2 oxidized [2Fe-2S]-[ferredoxin] + NADPH. The protein is Ferredoxin--NADP reductase of Streptococcus agalactiae serotype Ia (strain ATCC 27591 / A909 / CDC SS700).